Consider the following 193-residue polypeptide: Orotate phosphoribosyltransferase (193 aa).

5-phospho-alpha-D-ribose 1-diphosphate contacts are provided by residues Arg-85, Lys-89, and 111 to 119 (DDVLTTGKS). Residues Thr-115 and Arg-143 each contribute to the orotate site.

Belongs to the purine/pyrimidine phosphoribosyltransferase family. PyrE subfamily. Homodimer. Mg(2+) serves as cofactor.

The catalysed reaction is orotidine 5'-phosphate + diphosphate = orotate + 5-phospho-alpha-D-ribose 1-diphosphate. It participates in pyrimidine metabolism; UMP biosynthesis via de novo pathway; UMP from orotate: step 1/2. Catalyzes the transfer of a ribosyl phosphate group from 5-phosphoribose 1-diphosphate to orotate, leading to the formation of orotidine monophosphate (OMP). This is Orotate phosphoribosyltransferase from Pyrobaculum aerophilum (strain ATCC 51768 / DSM 7523 / JCM 9630 / CIP 104966 / NBRC 100827 / IM2).